Consider the following 185-residue polypeptide: ATP synthase subunit delta (185 aa).

Belongs to the ATPase delta chain family. In terms of assembly, F-type ATPases have 2 components, F(1) - the catalytic core - and F(0) - the membrane proton channel. F(1) has five subunits: alpha(3), beta(3), gamma(1), delta(1), epsilon(1). CF(0) has four main subunits: a(1), b(1), b'(1) and c(10-14). The alpha and beta chains form an alternating ring which encloses part of the gamma chain. F(1) is attached to F(0) by a central stalk formed by the gamma and epsilon chains, while a peripheral stalk is formed by the delta, b and b' chains.

The protein localises to the cellular thylakoid membrane. Its function is as follows. F(1)F(0) ATP synthase produces ATP from ADP in the presence of a proton or sodium gradient. F-type ATPases consist of two structural domains, F(1) containing the extramembraneous catalytic core and F(0) containing the membrane proton channel, linked together by a central stalk and a peripheral stalk. During catalysis, ATP synthesis in the catalytic domain of F(1) is coupled via a rotary mechanism of the central stalk subunits to proton translocation. This protein is part of the stalk that links CF(0) to CF(1). It either transmits conformational changes from CF(0) to CF(1) or is implicated in proton conduction. This Synechocystis sp. (strain ATCC 27184 / PCC 6803 / Kazusa) protein is ATP synthase subunit delta.